A 1007-amino-acid chain; its full sequence is Glutamate receptor ionotropic, delta-2 (1007 aa).

A signal peptide spans 1–23; sequence MEVFPFLLVLSVWWSRTWDSANA. An interaction with CBLN1 homotrimer region spans residues 24–345; it reads DSIIHIGAIF…NAFHKKLEDR (322 aa). Residues 24–566 are Extracellular-facing; the sequence is DSIIHIGAIF…DMFACLAPFD (543 aa). Cystine bridges form between Cys83/Cys355, Cys99/Cys131, and Cys298/Cys310. The N-linked (GlcNAc...) asparagine glycan is linked to Asn293. N-linked (GlcNAc...) asparagine glycosylation is present at Asn426. Ca(2+) is bound by residues Glu531, Val534, and Asp535. The chain crosses the membrane as a helical span at residues 567 to 587; that stretch reads LSLWACIAGTVLLVGLLVYLL. At 588–635 the chain is on the cytoplasmic side; the sequence is NWLNPPRLQMGSMTSTTLYNSMWFVYGSFVQQGGEVPYTTLATRMMMG. A helical transmembrane segment spans residues 636 to 656; sequence AWWLFALIVISSYTANLAAFL. The Extracellular portion of the chain corresponds to 657–830; the sequence is TITRIESSIQ…QKGGALDIKS (174 aa). 2 N-linked (GlcNAc...) asparagine glycosylation sites follow: Asn713 and Asn716. Residues Asp753, Asp755, and Ser757 each coordinate Ca(2+). Residues 831-851 form a helical membrane-spanning segment; it reads FAGVFCILAAGIVLSCFIAML. Residues 852–1007 lie on the Cytoplasmic side of the membrane; the sequence is ETWWNKRKGS…GNDPDRGTSI (156 aa). Ser883 carries the post-translational modification Phosphoserine. The residue at position 886 (Thr886) is a Phosphothreonine. Ser890 is subject to Phosphoserine. The tract at residues 921–991 is interaction with AP4M1; that stretch reads DFRNTHITTT…MSSIPYQPTP (71 aa). Positions 1005–1007 match the PDZ-binding motif; sequence TSI. At Ser1006 the chain carries Phosphoserine.

It belongs to the glutamate-gated ion channel (TC 1.A.10.1) family. GRID2 subfamily. In terms of assembly, tetramer; dimer of dimers. Interacts with EML2, MAGI2 (via PDZ domains) and AP4M1. Interacts with BECN1, GOPC, GRID2IP, SHANK1 and SHANK2. Interacts with CBLN2, but not with CBLN4. Interacts with CBLN1 (via C1q domain); the interaction is CBLN1-NRX1 complex formation-dependent; CBLN1-binding is calcium-independent; CBLN1 hexamers anchor GRID2 N-terminal domain dimers to monomeric NRXN1 isoform beta; promotes synaptogenesis and mediates the D-Serine-dependent long term depression signals and AMPA receptor endocytosis.

The protein resides in the postsynaptic cell membrane. The catalysed reaction is Ca(2+)(in) = Ca(2+)(out). It catalyses the reaction Na(+)(in) = Na(+)(out). Its function is as follows. Member of the ionotropic glutamate receptor family, which plays a crucial role in synaptic organization and signal transduction in the central nervous system. Although it shares structural features with ionotropic glutamate receptors, does not bind glutamate as a primary ligand. Promotes synaptogenesis and mediates the D-Serine-dependent long term depression signals and AMPA receptor endocytosis of cerebellar parallel fiber-Purkinje cell (PF-PC) synapses through the NRX1B-CBLN1-GRID2 triad complex. In the presence of neurexins and cerebellins, forms cation-selective channels that are proposed to be gated by glycine and D-serine. However, recent research disputes this ligand-gated cation channel activity. Cation-selective ion channel activity can be triggered by GRM1 in Purkinje cells. This Homo sapiens (Human) protein is Glutamate receptor ionotropic, delta-2 (GRID2).